Consider the following 305-residue polypeptide: Oxygen-dependent coproporphyrinogen-III oxidase (305 aa).

Residue S93 participates in substrate binding. A divalent metal cation contacts are provided by H97 and H107. H107 (proton donor) is an active-site residue. 109-111 (NVR) contributes to the substrate binding site. A divalent metal cation contacts are provided by H146 and H176. An important for dimerization region spans residues 241–276 (YVEFNLVYDRGTLFGLQSGGRTESILMSLPPQVRWG). 259–261 (GGR) contacts substrate.

Belongs to the aerobic coproporphyrinogen-III oxidase family. In terms of assembly, homodimer. Requires a divalent metal cation as cofactor.

Its subcellular location is the cytoplasm. It carries out the reaction coproporphyrinogen III + O2 + 2 H(+) = protoporphyrinogen IX + 2 CO2 + 2 H2O. It participates in porphyrin-containing compound metabolism; protoporphyrin-IX biosynthesis; protoporphyrinogen-IX from coproporphyrinogen-III (O2 route): step 1/1. In terms of biological role, involved in the heme biosynthesis. Catalyzes the aerobic oxidative decarboxylation of propionate groups of rings A and B of coproporphyrinogen-III to yield the vinyl groups in protoporphyrinogen-IX. The sequence is that of Oxygen-dependent coproporphyrinogen-III oxidase from Pseudomonas fluorescens (strain ATCC BAA-477 / NRRL B-23932 / Pf-5).